A 227-amino-acid chain; its full sequence is Orotate phosphoribosyltransferase 2 (227 aa).

Phenylalanine 41–phenylalanine 42 lines the orotate pocket. Residues tyrosine 79–lysine 80, arginine 109, lysine 110, lysine 113, histidine 115, and aspartate 135–alanine 143 each bind 5-phospho-alpha-D-ribose 1-diphosphate. The orotate site is built by threonine 139 and arginine 167.

Belongs to the purine/pyrimidine phosphoribosyltransferase family. PyrE subfamily. Homodimer.

It carries out the reaction orotidine 5'-phosphate + diphosphate = orotate + 5-phospho-alpha-D-ribose 1-diphosphate. Its pathway is pyrimidine metabolism; UMP biosynthesis via de novo pathway; UMP from orotate: step 1/2. Functionally, catalyzes the transfer of a ribosyl phosphate group from 5-phosphoribose 1-diphosphate to orotate, leading to the formation of orotidine monophosphate (OMP). The chain is Orotate phosphoribosyltransferase 2 (URA10) from Saccharomyces cerevisiae (strain ATCC 204508 / S288c) (Baker's yeast).